Here is a 106-residue protein sequence, read N- to C-terminus: ATP-dependent Clp protease adapter protein ClpS (106 aa).

Over residues 1–10 (MSQKTVHDQD) the composition is skewed to basic and acidic residues. A disordered region spans residues 1–22 (MSQKTVHDQDNALLLETGNTKV).

The protein belongs to the ClpS family. Binds to the N-terminal domain of the chaperone ClpA.

Functionally, involved in the modulation of the specificity of the ClpAP-mediated ATP-dependent protein degradation. This chain is ATP-dependent Clp protease adapter protein ClpS, found in Xylella fastidiosa (strain 9a5c).